The sequence spans 321 residues: Calcium-regulated beta-propeller protein CarP (321 aa).

The signal sequence occupies residues 1-42 (MTIHAQTPEPFSMSRAFTPRRLLLAVLLVALSALVLLGQSFR).

It belongs to the YjiK family.

It localises to the cell inner membrane. Its function is as follows. Plays a role in intracellular Ca(2+) homeostasis. Involved in modulating Ca(2+)-induced swarming motility and pyocyanine production. Plays a role in regulating virulence in a Ca(2+)-dependent manner. Involved in cell protection against oxidative stress in the presence of elevated Ca(2+). The sequence is that of Calcium-regulated beta-propeller protein CarP from Pseudomonas aeruginosa (strain ATCC 15692 / DSM 22644 / CIP 104116 / JCM 14847 / LMG 12228 / 1C / PRS 101 / PAO1).